Here is a 299-residue protein sequence, read N- to C-terminus: Serine/threonine-protein kinase 1 (299 aa).

Residues 39–277 (IATKPMFEGG…FKGLVSHPWF (239 aa)) enclose the Protein kinase domain. ATP contacts are provided by residues 45-53 (FEGGRRNNV) and lysine 66. Catalysis depends on aspartate 153, which acts as the Proton acceptor.

Belongs to the protein kinase superfamily. Ser/Thr protein kinase family.

The protein resides in the virion. It localises to the host cytoplasm. It catalyses the reaction L-seryl-[protein] + ATP = O-phospho-L-seryl-[protein] + ADP + H(+). The catalysed reaction is L-threonyl-[protein] + ATP = O-phospho-L-threonyl-[protein] + ADP + H(+). Essential for viral replication. It may mediate the virus progression through DNA replication. This chain is Serine/threonine-protein kinase 1, found in African swine fever virus (isolate Tick/Malawi/Lil 20-1/1983) (ASFV).